The chain runs to 117 residues: Mitochondrial import inner membrane translocase subunit Tim10B (117 aa).

The Twin CX3C motif signature appears at 22-46 (CFSRCVDNLSQRDLGGHEDLCVDRC). Cystine bridges form between Cys-22–Cys-46 and Cys-26–Cys-42. A compositionally biased stretch (basic and acidic residues) spans 75-97 (EMEENARKAEQQQREQEKERLKE). Residues 75 to 117 (EMEENARKAEQQQREQEKERLKEAAATAVLTPVQPPVAGNLSM) form a disordered region.

This sequence belongs to the small Tim family. As to quaternary structure, component of the TIM22 complex, whose core is composed of Tim22, associated with peripheral protein Tim9b/Tim10b and the 70 kDa heterohexamer. In most cases, the 70 kDa complex is composed of TIMM9 and TIMM10.

It is found in the mitochondrion inner membrane. In terms of biological role, component of the TIM22 complex, a complex that mediates the import and insertion of multi-pass transmembrane proteins into the mitochondrial inner membrane. The TIM22 complex forms a twin-pore translocase that uses the membrane potential as the external driving force. In the TIM22 complex, it may act as a docking point for the soluble 70 kDa complex that guides the target proteins in transit through the aqueous mitochondrial intermembrane space. The sequence is that of Mitochondrial import inner membrane translocase subunit Tim10B (Tim9b) from Drosophila melanogaster (Fruit fly).